The following is a 318-amino-acid chain: Methionyl-tRNA formyltransferase (318 aa).

110–113 serves as a coordination point for (6S)-5,6,7,8-tetrahydrofolate; it reads SLLP.

The protein belongs to the Fmt family.

The catalysed reaction is L-methionyl-tRNA(fMet) + (6R)-10-formyltetrahydrofolate = N-formyl-L-methionyl-tRNA(fMet) + (6S)-5,6,7,8-tetrahydrofolate + H(+). Its function is as follows. Attaches a formyl group to the free amino group of methionyl-tRNA(fMet). The formyl group appears to play a dual role in the initiator identity of N-formylmethionyl-tRNA by promoting its recognition by IF2 and preventing the misappropriation of this tRNA by the elongation apparatus. This chain is Methionyl-tRNA formyltransferase, found in Geobacillus sp. (strain WCH70).